The sequence spans 754 residues: Peptidyl-prolyl cis-trans isomerase G (754 aa).

The 166-residue stretch at 11 to 176 folds into the PPIase cyclophilin-type domain; the sequence is FFDIAINNQP…AEVRILSCGE (166 aa). A compositionally biased stretch (basic residues) spans 182–193; the sequence is KVKKEEKKRHKS. Residues 182-754 are disordered; that stretch reads KVKKEEKKRH…SPGTDEDKSG (573 aa). Over residues 194 to 216 the composition is skewed to low complexity; that stretch reads SSSSSSSSSDSDSSSDSQSSSDS. The span at 228–253 shows a compositional bias: basic residues; it reads KKRKKKHRKNSRKHKKEKKKRKKSKK. S254, S256, S257, S259, and S290 each carry phosphoserine. Residues 292–310 show a composition bias toward basic and acidic residues; the sequence is PKADEKERKNREREREREC. S315 is subject to Phosphoserine. Positions 329-347 are enriched in basic residues; that stretch reads SGRKIKGRGPRRYRTPSRS. Basic and acidic residues-rich tracts occupy residues 348-368 and 379-449; these read RSRD…EMQR and RWIK…DKYK. S356 bears the Phosphoserine mark. T358 bears the Phosphothreonine mark. Position 386 is a phosphoserine (S386). A Glycyl lysine isopeptide (Lys-Gly) (interchain with G-Cter in SUMO2) cross-link involves residue K392. Phosphoserine is present on residues S397, S413, and S415. The segment covering 450–462 has biased composition (basic residues); that stretch reads NKVKKRAKSKSRS. Composition is skewed to basic and acidic residues over residues 463–553 and 578–599; these read KSKE…DITK and RTHD…QEYR. Residues 616–627 show a composition bias toward basic residues; that stretch reads SRSKDRRRRRRD. Over residues 628 to 686 the composition is skewed to basic and acidic residues; that stretch reads SRSSEREESQSRNKDKYRNQESKSSHRKENSESEKRMYSKSRDHNSSNNSREKKADRDQ. 2 positions are modified to phosphoserine: S687 and S690. A compositionally biased stretch (polar residues) spans 687–698; it reads SPFSKIKQSSQD. Residue K693 forms a Glycyl lysine isopeptide (Lys-Gly) (interchain with G-Cter in SUMO2) linkage. Phosphoserine occurs at positions 696, 744, and 745. Positions 707 to 754 are enriched in basic and acidic residues; sequence KNKEDEKIRSSVEKENQKSKGQENDHVHEKNKKFDHESSPGTDEDKSG. Phosphothreonine is present on T748. Residue S753 is modified to Phosphoserine.

Interacts with CLK1, PNN and with the phosphorylated C-terminal domain of RNA polymerase II. Ubiquitous.

It localises to the nucleus matrix. The protein resides in the nucleus speckle. The catalysed reaction is [protein]-peptidylproline (omega=180) = [protein]-peptidylproline (omega=0). Its activity is regulated as follows. Inhibited by cyclosporin A (CsA). Functionally, PPIase that catalyzes the cis-trans isomerization of proline imidic peptide bonds in oligopeptides and may therefore assist protein folding. May be implicated in the folding, transport, and assembly of proteins. May play an important role in the regulation of pre-mRNA splicing. This chain is Peptidyl-prolyl cis-trans isomerase G (PPIG), found in Homo sapiens (Human).